The chain runs to 820 residues: Breast cancer anti-estrogen resistance protein 3 homolog (820 aa).

A2 carries the post-translational modification N-acetylalanine. Phosphoserine occurs at positions 32, 72, 77, 176, and 284. The tract at residues 40 to 81 (DAYQDVSIHGTLPRKKKGPPSIRSCDNAGHSKSPRQSSPLTQ) is disordered. The region spanning 148-247 (WYHGRIPRQV…QSGAIIFQPI (100 aa)) is the SH2 domain. K329 is modified (N6-methyllysine). The disordered stretch occupies residues 346–367 (QSPSMDTSPCPSSPVFRTGSEP). 3 positions are modified to phosphoserine: S353, S358, and S370. At R437 the chain carries Omega-N-methylarginine. S466 is subject to Phosphoserine. Residues 543-813 (DARVIAQHML…TALSRKLEPP (271 aa)) enclose the Ras-GEF domain. The segment at 739–743 (LATAR) is mediates the interaction with BCAR1/p130CAS.

Part of a complex comprised of PTPRA, BCAR1, BCAR3 (via SH2 domain) and SRC; the formation of the complex is dependent on integrin mediated-tyrosine phosphorylation of PTPRA. Within the complex, interacts (via SH2 domain) with PTPRA (when phosphorylated on 'Tyr-825'). Interacts (via Ras-GEF domain) with BCAR1. Interacts (via Ras-GEF domain) with NEDD9. Interacts with PTK2B/FAK1. Interacts with PTPN1. Interacts (via SH2 domain) with EGFR (when tyrosine-phosphorylated). Phosphorylated on tyrosine residues. As to expression, abundantly expressed in the lung and brain, with lower expression in splenic lymphocytes and liver (at protein level). Expressed in splenic lymphocytes (at protein level). Expressed in the lymph node cortical region, periphery of the splenic white pulp and in alveolar lung fibroblasts. Expressed in epithelial cells in the lens equatorial region and early stage nucleated cortical lens fiber cells. Expressed in the thymus. Expressed in B-cells.

It localises to the cytoplasm. The protein resides in the cell junction. The protein localises to the focal adhesion. Acts as an adapter protein downstream of several growth factor receptors to promote cell proliferation, migration, and redistribution of actin fibers. Specifically involved in INS/insulin signaling pathway by mediating MAPK1/ERK2-MAPK3/ERK1 activation and DNA synthesis. Promotes insulin-mediated membrane ruffling. In response to vasoconstrictor peptide EDN1, involved in the activation of RAP1 downstream of PTK2B via interaction with phosphorylated BCAR1. Inhibits cell migration and invasion via regulation of TGFB-mediated matrix digestion, actin filament rearrangement, and inhibition of invadopodia activity. May inhibit TGFB-SMAD signaling, via facilitating BCAR1 and SMAD2 and/or SMAD3 interaction. Regulates EGF-induced DNA synthesis. Required for the maintenance of ocular lens morphology and structural integrity, potentially via regulation of focal adhesion complex signaling. Acts upstream of PTPRA to regulate the localization of BCAR1 and PTPRA to focal adhesions, via regulation of SRC-mediated phosphorylation of PTPRA. Positively regulates integrin-induced tyrosine phosphorylation of BCAR1. Acts as a guanine nucleotide exchange factor (GEF) for small GTPases RALA, RAP1A and RRAS. However, in a contrasting study, lacks GEF activity towards RAP1. The polypeptide is Breast cancer anti-estrogen resistance protein 3 homolog (Bcar3) (Mus musculus (Mouse)).